The primary structure comprises 441 residues: Mitochondrial distribution and morphology protein 12 (441 aa).

Residues 1–441 (MSIDIDWERA…VYPSFWTFLV (441 aa)) enclose the SMP-LTD domain. 2 disordered regions span residues 70-89 (YEDG…PMRE) and 180-289 (TPLR…RMRE). Polar residues-rich tracts occupy residues 226-245 (SRPS…SVST) and 253-263 (SSQTVLANNPG).

Belongs to the MDM12 family. As to quaternary structure, component of the ER-mitochondria encounter structure (ERMES) or MDM complex, composed of MMM1, MDM10, MDM12 and MDM34. An MMM1 homodimer associates with one molecule of MDM12 on each side in a pairwise head-to-tail manner, and the SMP-LTD domains of MMM1 and MDM12 generate a continuous hydrophobic tunnel for phospholipid trafficking.

The protein localises to the mitochondrion outer membrane. It is found in the endoplasmic reticulum membrane. Component of the ERMES/MDM complex, which serves as a molecular tether to connect the endoplasmic reticulum (ER) and mitochondria. Components of this complex are involved in the control of mitochondrial shape and protein biogenesis, and function in nonvesicular lipid trafficking between the ER and mitochondria. MDM12 is required for the interaction of the ER-resident membrane protein MMM1 and the outer mitochondrial membrane-resident beta-barrel protein MDM10. The MDM12-MMM1 subcomplex functions in the major beta-barrel assembly pathway that is responsible for biogenesis of all mitochondrial outer membrane beta-barrel proteins, and acts in a late step after the SAM complex. The MDM10-MDM12-MMM1 subcomplex further acts in the TOM40-specific pathway after the action of the MDM12-MMM1 complex. Essential for establishing and maintaining the structure of mitochondria and maintenance of mtDNA nucleoids. In Paracoccidioides brasiliensis (strain Pb03), this protein is Mitochondrial distribution and morphology protein 12.